The sequence spans 333 residues: Casein kinase II subunit beta-1 (333 aa).

Over residues 58-78 (VEPEDDDDEEEEDEEDEEDMS) the composition is skewed to acidic residues. 2 disordered regions span residues 58–92 (VEPE…ERRH) and 282–333 (ARRY…ESEL). The span at 305–316 (ASRRRGPPRRQK) shows a compositional bias: basic residues.

Belongs to the casein kinase 2 subunit beta family. Tetramer composed of two alpha chains, one beta chain and one beta' chain. Post-translationally, phosphorylated by alpha subunit.

Its function is as follows. Regulatory subunit of casein kinase II/CK2. As part of the kinase complex regulates the basal catalytic activity of the alpha subunit a constitutively active serine/threonine-protein kinase that phosphorylates a large number of substrates containing acidic residues C-terminal to the phosphorylated serine or threonine. The polypeptide is Casein kinase II subunit beta-1 (ckb-1) (Neurospora crassa (strain ATCC 24698 / 74-OR23-1A / CBS 708.71 / DSM 1257 / FGSC 987)).